A 49-amino-acid polypeptide reads, in one-letter code: Disintegrin ocellatin (49 aa).

Residues 1–47 form the Disintegrin domain; the sequence is DCESGPCCDNCKFLKEGTICKMARGDNMHHYCNGKTCDCPRNPYKGE. 4 disulfides stabilise this stretch: cysteine 2–cysteine 11, cysteine 7–cysteine 32, cysteine 8–cysteine 37, and cysteine 20–cysteine 39. The short motif at 24–26 is the Cell attachment site element; the sequence is RGD.

The protein belongs to the venom metalloproteinase (M12B) family. P-II subfamily. P-IIa sub-subfamily. Monomer. As to expression, expressed by the venom gland.

Its subcellular location is the secreted. Its function is as follows. Inhibits ADP-induced human platelet aggregation. In Echis ocellatus (Ocellated saw-scaled viper), this protein is Disintegrin ocellatin.